Consider the following 261-residue polypeptide: tRNA pseudouridine synthase A (261 aa).

Catalysis depends on Asp51, which acts as the Nucleophile. Tyr109 serves as a coordination point for substrate.

It belongs to the tRNA pseudouridine synthase TruA family. As to quaternary structure, homodimer.

It catalyses the reaction uridine(38/39/40) in tRNA = pseudouridine(38/39/40) in tRNA. Formation of pseudouridine at positions 38, 39 and 40 in the anticodon stem and loop of transfer RNAs. The polypeptide is tRNA pseudouridine synthase A (Shewanella denitrificans (strain OS217 / ATCC BAA-1090 / DSM 15013)).